Consider the following 435-residue polypeptide: Monodictyphenone cluster transcription factor (435 aa).

Residues 23 to 50 (CHACALSKLKCSQDKPTCSRCVKRGTAC) constitute a DNA-binding region (zn(2)-C6 fungal-type). The segment at 117 to 147 (QYHQRTPSYPESIPSLLSSTGPGTSATSPLT) is disordered. Low complexity predominate over residues 130 to 147 (PSLLSSTGPGTSATSPLT).

It localises to the nucleus. Transcription factor that regulates the expression of the gene cluster that mediates the biosynthesis of monodictyphenone, a prenyl xanthone derivative. This chain is Monodictyphenone cluster transcription factor, found in Emericella nidulans (strain FGSC A4 / ATCC 38163 / CBS 112.46 / NRRL 194 / M139) (Aspergillus nidulans).